The primary structure comprises 568 residues: Urease subunit alpha (568 aa).

Positions 131-568 (GGIDTHIHFI…LPMAQRYFLF (438 aa)) constitute a Urease domain. Residues His136, His138, and Lys219 each coordinate Ni(2+). Lys219 is subject to N6-carboxylysine. Substrate is bound at residue His221. Positions 248 and 274 each coordinate Ni(2+). The active-site Proton donor is the His322. A Ni(2+)-binding site is contributed by Asp362.

The protein belongs to the metallo-dependent hydrolases superfamily. Urease alpha subunit family. As to quaternary structure, heterotrimer of UreA (gamma), UreB (beta) and UreC (alpha) subunits. Three heterotrimers associate to form the active enzyme. The cofactor is Ni cation. Carboxylation allows a single lysine to coordinate two nickel ions.

The protein localises to the cytoplasm. It carries out the reaction urea + 2 H2O + H(+) = hydrogencarbonate + 2 NH4(+). It participates in nitrogen metabolism; urea degradation; CO(2) and NH(3) from urea (urease route): step 1/1. This Trichormus variabilis (strain ATCC 29413 / PCC 7937) (Anabaena variabilis) protein is Urease subunit alpha.